A 271-amino-acid chain; its full sequence is Tryptophan synthase alpha chain (271 aa).

Active-site proton acceptor residues include E49 and D60.

The protein belongs to the TrpA family. In terms of assembly, tetramer of two alpha and two beta chains.

The catalysed reaction is (1S,2R)-1-C-(indol-3-yl)glycerol 3-phosphate + L-serine = D-glyceraldehyde 3-phosphate + L-tryptophan + H2O. Its pathway is amino-acid biosynthesis; L-tryptophan biosynthesis; L-tryptophan from chorismate: step 5/5. The alpha subunit is responsible for the aldol cleavage of indoleglycerol phosphate to indole and glyceraldehyde 3-phosphate. This Burkholderia thailandensis (strain ATCC 700388 / DSM 13276 / CCUG 48851 / CIP 106301 / E264) protein is Tryptophan synthase alpha chain.